We begin with the raw amino-acid sequence, 176 residues long: Urease accessory protein UreE (176 aa).

The interval 134–176 is disordered; the sequence is EAGAYGSGGHHHHGESSQGHAHGPLAPIPVHQKIHRPSDIPSR.

The protein belongs to the UreE family.

The protein resides in the cytoplasm. Its function is as follows. Involved in urease metallocenter assembly. Binds nickel. Probably functions as a nickel donor during metallocenter assembly. The polypeptide is Urease accessory protein UreE (Nitrosospira multiformis (strain ATCC 25196 / NCIMB 11849 / C 71)).